A 222-amino-acid polypeptide reads, in one-letter code: Ribonuclease 3 (222 aa).

Residues 1 to 19 form the signal peptide; that stretch reads MKFFIFILALQQLYVQSFA. Glutamine 30 serves as a coordination point for RNA. An intrachain disulfide couples cysteine 36 to cysteine 42. RNA-binding positions include histidine 57, phenylalanine 107, 110–111, and 114–115; these read HE and KH. The Proton donor role is filled by histidine 57. 3 disulfide bridges follow: cysteine 72/cysteine 118, cysteine 178/cysteine 213, and cysteine 194/cysteine 205. Glutamate 111 is a catalytic residue. The active-site Proton acceptor is histidine 115.

It belongs to the RNase T2 family.

The catalysed reaction is a ribonucleotidyl-ribonucleotide-RNA + H2O = a 3'-end 3'-phospho-ribonucleotide-RNA + a 5'-end dephospho-ribonucleoside-RNA + H(+). Its function is as follows. May remobilize phosphate, particularly when cells senesce or when phosphate becomes limiting. This Arabidopsis thaliana (Mouse-ear cress) protein is Ribonuclease 3 (RNS3).